The chain runs to 243 residues: Ras-related protein Rab-12 (243 aa).

M1 bears the N-acetylmethionine mark. Residues 1–36 are disordered; the sequence is MDPSAALHRRPAGGGLGAVSPALSGGQARRRKQPPR. Phosphoserine is present on residues S20 and S24. Residues G51, V52, G53, K54, T55, S72, and T73 each contribute to the GTP site. T55 provides a ligand contact to Mg(2+). Short sequence motifs (switch) lie at residues 64 to 78 and 96 to 113; these read DTFCEACKSTVGVDF and DTAGQERFNSITSAYYRS. T73 and D96 together coordinate Mg(2+). Position 99 (G99) interacts with GTP. S105 bears the Phosphoserine mark. GTP contacts are provided by N154, K155, D157, S185, A186, and K187. S-geranylgeranyl cysteine attachment occurs at residues C242 and C243.

Belongs to the small GTPase superfamily. Rab family. As to quaternary structure, interacts with RABIF and OPTN. Interacts with LRRK2; interaction facilitates phosphorylation of Ser-105. Interacts with GDI1, GDI2 and CHM; these interactions are disrupted by phosphorylation on Ser-105. Interacts with RILPL1 and RILPL2; these interactions are dependent on phosphorylation of Ser-105. Mg(2+) is required as a cofactor. Phosphorylation of Ser-105 in the switch II region by LRRK2 prevents the association of RAB regulatory proteins, including CHM and RAB GDP dissociation inhibitors GDI1 and GDI2. Highest levels in skeletal and cardiac muscle. Also found in comparable amounts in brain, spinal cord and lung. Also detected in testis where it is expressed by Sertoli cells of the seminiferous tubules (at protein level).

Its subcellular location is the recycling endosome membrane. It is found in the lysosome membrane. The protein localises to the golgi apparatus membrane. It localises to the cytoplasmic vesicle. The protein resides in the autophagosome. It catalyses the reaction GTP + H2O = GDP + phosphate + H(+). Regulated by guanine nucleotide exchange factors (GEFs) including DENND3 which promote the exchange of bound GDP for free GTP. Regulated by GTPase activating proteins (GAPs) which increase the GTP hydrolysis activity. Inhibited by GDP dissociation inhibitors (GDIs). The small GTPases Rab are key regulators of intracellular membrane trafficking, from the formation of transport vesicles to their fusion with membranes. Rabs cycle between an inactive GDP-bound form and an active GTP-bound form that is able to recruit to membranes different sets of downstream effectors directly responsible for vesicle formation, movement, tethering and fusion. RAB12 may play a role in protein transport from recycling endosomes to lysosomes regulating, for instance, the degradation of the transferrin receptor. Involved in autophagy. The chain is Ras-related protein Rab-12 from Rattus norvegicus (Rat).